The primary structure comprises 223 residues: Probable GTP-binding protein EngB (223 aa).

Positions 49-223 constitute an EngB-type G domain; it reads MGVEIAFAGR…LRAALAGLTD (175 aa). GTP is bound by residues 57 to 64, 84 to 88, 102 to 105, 169 to 172, and 203 to 205; these read GRSNVGKS, GRTKQ, DMPG, TKAD, and TSS. 2 residues coordinate Mg(2+): S64 and T86.

It belongs to the TRAFAC class TrmE-Era-EngA-EngB-Septin-like GTPase superfamily. EngB GTPase family. It depends on Mg(2+) as a cofactor.

Necessary for normal cell division and for the maintenance of normal septation. The polypeptide is Probable GTP-binding protein EngB (Granulibacter bethesdensis (strain ATCC BAA-1260 / CGDNIH1)).